The primary structure comprises 272 residues: Shikimate dehydrogenase (NADP(+)) (272 aa).

Shikimate is bound by residues Ser14 to Ser16 and Thr61. Lys65 serves as the catalytic Proton acceptor. Residue Asp102 participates in shikimate binding. NADP(+) contacts are provided by residues Gly127–Ala131, Asn151–Lys156, and Leu215. Tyr217 contacts shikimate. Gly239 contacts NADP(+).

This sequence belongs to the shikimate dehydrogenase family. In terms of assembly, homodimer.

It carries out the reaction shikimate + NADP(+) = 3-dehydroshikimate + NADPH + H(+). The protein operates within metabolic intermediate biosynthesis; chorismate biosynthesis; chorismate from D-erythrose 4-phosphate and phosphoenolpyruvate: step 4/7. Functionally, involved in the biosynthesis of the chorismate, which leads to the biosynthesis of aromatic amino acids. Catalyzes the reversible NADPH linked reduction of 3-dehydroshikimate (DHSA) to yield shikimate (SA). The sequence is that of Shikimate dehydrogenase (NADP(+)) from Coxiella burnetii (strain Dugway 5J108-111).